A 223-amino-acid chain; its full sequence is Ribonuclease S-2 (223 aa).

A signal peptide spans 1 to 22 (MAKSQLVSALFVFFFSLSPIYG). A disulfide bridge connects residues C38 and C44. N-linked (GlcNAc...) asparagine glycosylation occurs at N51. The active-site Proton donor is H55. Residues H55 and 94 to 95 (QL) each bind RNA. 3 cysteine pairs are disulfide-bonded: C71-C119, C178-C211, and C194-C205. The active site involves Q112. 115-116 (KH) lines the RNA pocket. H116 (proton acceptor) is an active-site residue.

Belongs to the RNase T2 family. In terms of tissue distribution, pistil.

The protein localises to the secreted. It localises to the extracellular space. The enzyme catalyses a ribonucleotidyl-ribonucleotide-RNA + H2O = a 3'-end 3'-phospho-ribonucleotide-RNA + a 5'-end dephospho-ribonucleoside-RNA + H(+). In terms of biological role, self-incompatibility (SI) is the inherited ability of a flowering plant to prevent self-fertilization by discriminating between self and non-self pollen during pollination. In many species of the Solanaceae, self-incompatibility is controlled by the single, multiallelic locus S. This stylar glycoprotein is associated with expression of self-incompatibility in potato. This chain is Ribonuclease S-2, found in Solanum tuberosum (Potato).